A 194-amino-acid chain; its full sequence is Phosphoheptose isomerase (194 aa).

The SIS domain maps to 31–186 (ICQRFQAGNK…CEQVESRLFA (156 aa)). Residue 46–48 (NGG) coordinates substrate. His55 and Glu59 together coordinate Zn(2+). Residues Glu59, 88-89 (ND), 114-116 (STS), Ser119, and Gln166 each bind substrate. Gln166 and His174 together coordinate Zn(2+).

It belongs to the SIS family. GmhA subfamily. The cofactor is Zn(2+).

It is found in the cytoplasm. The catalysed reaction is 2 D-sedoheptulose 7-phosphate = D-glycero-alpha-D-manno-heptose 7-phosphate + D-glycero-beta-D-manno-heptose 7-phosphate. It participates in carbohydrate biosynthesis; D-glycero-D-manno-heptose 7-phosphate biosynthesis; D-glycero-alpha-D-manno-heptose 7-phosphate and D-glycero-beta-D-manno-heptose 7-phosphate from sedoheptulose 7-phosphate: step 1/1. Catalyzes the isomerization of sedoheptulose 7-phosphate in D-glycero-D-manno-heptose 7-phosphate. This Synechocystis sp. (strain ATCC 27184 / PCC 6803 / Kazusa) protein is Phosphoheptose isomerase.